Reading from the N-terminus, the 106-residue chain is Large ribosomal subunit protein eL42 (106 aa).

Positions 1 to 29 (MVNIPKTRRTYCKGKACRKHTPHKVTQYK) are enriched in basic residues. The segment at 1–56 (MVNIPKTRRTYCKGKACRKHTPHKVTQYKKGKDSLSAQGKRRYDRKQSGYGGQTKP) is disordered.

Belongs to the eukaryotic ribosomal protein eL42 family.

This is Large ribosomal subunit protein eL42 (RPL44) from Cryptococcus neoformans var. neoformans serotype D (strain B-3501A) (Filobasidiella neoformans).